A 388-amino-acid polypeptide reads, in one-letter code: Yellow-related salivary protein SP03 (388 aa).

A signal peptide spans M1–A18. N29 carries an N-linked (GlcNAc...) asparagine glycan.

The protein belongs to the major royal jelly protein family. As to expression, female salivary gland (at protein level).

It localises to the secreted. Its function is as follows. Probably modulates blood feeding of sand flies on vertebrate species by binding and sequestering different mediators involved in the host response. Binds biogenic amines. Binds noradrenaline with medium affinity. Binds octopamine with low affinity. Poorly binds histamine, adrenaline and serotonin. The sequence is that of Yellow-related salivary protein SP03 from Phlebotomus perniciosus (Phlebotomine sand fly).